We begin with the raw amino-acid sequence, 88 residues long: Large ribosomal subunit protein bL27 (88 aa).

A disordered region spans residues 1 to 21 (MAHKKGTGSTRNGRDSNAKRL).

This sequence belongs to the bacterial ribosomal protein bL27 family.

This chain is Large ribosomal subunit protein bL27, found in Parasynechococcus marenigrum (strain WH8102).